A 189-amino-acid chain; its full sequence is Peptidyl-tRNA hydrolase (189 aa).

Y14 is a binding site for tRNA. H19 serves as the catalytic Proton acceptor. The tRNA site is built by Y64, N66, and N112.

Belongs to the PTH family. In terms of assembly, monomer.

Its subcellular location is the cytoplasm. The enzyme catalyses an N-acyl-L-alpha-aminoacyl-tRNA + H2O = an N-acyl-L-amino acid + a tRNA + H(+). Functionally, hydrolyzes ribosome-free peptidyl-tRNAs (with 1 or more amino acids incorporated), which drop off the ribosome during protein synthesis, or as a result of ribosome stalling. Its function is as follows. Catalyzes the release of premature peptidyl moieties from peptidyl-tRNA molecules trapped in stalled 50S ribosomal subunits, and thus maintains levels of free tRNAs and 50S ribosomes. The sequence is that of Peptidyl-tRNA hydrolase from Clostridium botulinum (strain Loch Maree / Type A3).